The primary structure comprises 217 residues: Trimethylamine corrinoid protein 2 (217 aa).

The 92-residue stretch at methionine 1–threonine 92 folds into the B12-binding N-terminal domain. The region spanning leucine 94–serine 217 is the B12-binding domain. Histidine 107 contacts methylcob(III)alamin.

This sequence belongs to the methylamine corrinoid protein family. As to quaternary structure, can form a complex with MttB.

It participates in one-carbon metabolism; methanogenesis from trimethylamine. In terms of biological role, acts probably as a methyl group carrier between MttB and either MtbA or MtaA. The polypeptide is Trimethylamine corrinoid protein 2 (mttC2) (Methanosarcina acetivorans (strain ATCC 35395 / DSM 2834 / JCM 12185 / C2A)).